A 464-amino-acid polypeptide reads, in one-letter code: Dihydrolipoyl dehydrogenase (464 aa).

FAD-binding positions include 33-41 (EPKYWGGVC), Lys-50, and Gly-113. A disulfide bridge links Cys-41 with Cys-46. NAD(+) contacts are provided by residues 178-182 (GAGAI), Glu-201, and 266-269 (AIGF). 2 residues coordinate FAD: Asp-309 and Ala-317. His-443 acts as the Proton acceptor in catalysis.

Belongs to the class-I pyridine nucleotide-disulfide oxidoreductase family. Homodimer. Part of the PDH complex, consisting of multiple copies of AceE (E1), DlaT (E2) and Lpd (E3), and of the BCKADH complex, consisting of multiple copies of BkdA/BkdB (E1), BkdC (E2) and Lpd (E3). FAD is required as a cofactor.

The protein resides in the cytoplasm. It catalyses the reaction N(6)-[(R)-dihydrolipoyl]-L-lysyl-[protein] + NAD(+) = N(6)-[(R)-lipoyl]-L-lysyl-[protein] + NADH + H(+). In terms of biological role, lipoamide dehydrogenase is a component of the alpha-ketoacid dehydrogenase complexes. Catalyzes the reoxidation of dihydrolipoyl groups which are covalently attached to the lipoate acyltransferase components (E2) of the complexes. This is Dihydrolipoyl dehydrogenase (lpd) from Mycobacterium bovis (strain ATCC BAA-935 / AF2122/97).